Consider the following 204-residue polypeptide: Thymidylate kinase (204 aa).

11-18 serves as a coordination point for ATP; the sequence is GLDKSGKT.

The protein belongs to the thymidylate kinase family.

It carries out the reaction dTMP + ATP = dTDP + ADP. It participates in pyrimidine metabolism; dTTP biosynthesis. In Ectromelia virus (strain Moscow) (ECTV), this protein is Thymidylate kinase (TMK).